The sequence spans 72 residues: Translation initiation factor IF-1 (72 aa).

One can recognise an S1-like domain in the interval 1-72 (MAKEKDTIRT…PTRGRIVYRK (72 aa)).

Belongs to the IF-1 family. In terms of assembly, component of the 30S ribosomal translation pre-initiation complex which assembles on the 30S ribosome in the order IF-2 and IF-3, IF-1 and N-formylmethionyl-tRNA(fMet); mRNA recruitment can occur at any time during PIC assembly.

It localises to the cytoplasm. One of the essential components for the initiation of protein synthesis. Stabilizes the binding of IF-2 and IF-3 on the 30S subunit to which N-formylmethionyl-tRNA(fMet) subsequently binds. Helps modulate mRNA selection, yielding the 30S pre-initiation complex (PIC). Upon addition of the 50S ribosomal subunit IF-1, IF-2 and IF-3 are released leaving the mature 70S translation initiation complex. The polypeptide is Translation initiation factor IF-1 (Thermus thermophilus (strain ATCC BAA-163 / DSM 7039 / HB27)).